A 417-amino-acid polypeptide reads, in one-letter code: D-inositol 3-phosphate glycosyltransferase (417 aa).

His10 is a binding site for 1D-myo-inositol 3-phosphate. UDP-N-acetyl-alpha-D-glucosamine is bound by residues 16–17 (QP) and Gly24. 1D-myo-inositol 3-phosphate contacts are provided by residues 21–26 (DAGGMN), Lys79, Tyr112, Thr136, and Arg156. Positions 230, 235, and 296 each coordinate UDP-N-acetyl-alpha-D-glucosamine. The Mg(2+) site is built by Tyr305, Arg306, and Ala308. Glu318 and Glu326 together coordinate UDP-N-acetyl-alpha-D-glucosamine. Thr332 contacts Mg(2+).

It belongs to the glycosyltransferase group 1 family. MshA subfamily. In terms of assembly, homodimer.

The catalysed reaction is 1D-myo-inositol 3-phosphate + UDP-N-acetyl-alpha-D-glucosamine = 1D-myo-inositol 2-acetamido-2-deoxy-alpha-D-glucopyranoside 3-phosphate + UDP + H(+). Catalyzes the transfer of a N-acetyl-glucosamine moiety to 1D-myo-inositol 3-phosphate to produce 1D-myo-inositol 2-acetamido-2-deoxy-glucopyranoside 3-phosphate in the mycothiol biosynthesis pathway. This Actinosynnema mirum (strain ATCC 29888 / DSM 43827 / JCM 3225 / NBRC 14064 / NCIMB 13271 / NRRL B-12336 / IMRU 3971 / 101) protein is D-inositol 3-phosphate glycosyltransferase.